Here is a 393-residue protein sequence, read N- to C-terminus: Cytochrome b (393 aa).

4 consecutive transmembrane segments (helical) span residues 32–52 (FGSL…TLAM), 76–98 (WLIR…LHMG), 113–133 (VWTL…LGYV), and 179–199 (FFAL…MHLI). Residues His82 and His96 each coordinate heme b. Residues His183 and His197 each coordinate heme b. His202 is an a ubiquinone binding site. The next 4 helical transmembrane spans lie at 226–246 (FIFK…IFVF), 290–310 (LLGV…PFTD), 322–342 (LSKI…KLGA), and 349–369 (FIEF…IIVP).

Belongs to the cytochrome b family. In terms of assembly, fungal cytochrome b-c1 complex contains 10 subunits; 3 respiratory subunits, 2 core proteins and 5 low-molecular weight proteins. Cytochrome b-c1 complex is a homodimer. Heme b is required as a cofactor.

Its subcellular location is the mitochondrion inner membrane. Component of the ubiquinol-cytochrome c reductase complex (complex III or cytochrome b-c1 complex) that is part of the mitochondrial respiratory chain. The b-c1 complex mediates electron transfer from ubiquinol to cytochrome c. Contributes to the generation of a proton gradient across the mitochondrial membrane that is then used for ATP synthesis. The polypeptide is Cytochrome b (COB) (Venturia inaequalis (Apple scab fungus)).